The chain runs to 285 residues: 3-methyl-2-oxobutanoate hydroxymethyltransferase (285 aa).

The disordered stretch occupies residues 1-22 (MSEHNVYGAAQPAQPGQPAQPR). Residues 8–21 (GAAQPAQPGQPAQP) are compositionally biased toward low complexity. Mg(2+)-binding residues include Asp66 and Asp105. Residues 66 to 67 (DS), Asp105, and Lys135 each bind 3-methyl-2-oxobutanoate. Glu137 lines the Mg(2+) pocket. Residue Glu203 is the Proton acceptor of the active site.

It belongs to the PanB family. As to quaternary structure, homodecamer; pentamer of dimers. Requires Mg(2+) as cofactor.

The protein localises to the cytoplasm. It carries out the reaction 3-methyl-2-oxobutanoate + (6R)-5,10-methylene-5,6,7,8-tetrahydrofolate + H2O = 2-dehydropantoate + (6S)-5,6,7,8-tetrahydrofolate. Its pathway is cofactor biosynthesis; (R)-pantothenate biosynthesis; (R)-pantoate from 3-methyl-2-oxobutanoate: step 1/2. Its function is as follows. Catalyzes the reversible reaction in which hydroxymethyl group from 5,10-methylenetetrahydrofolate is transferred onto alpha-ketoisovalerate to form ketopantoate. This Mycolicibacterium paratuberculosis (strain ATCC BAA-968 / K-10) (Mycobacterium paratuberculosis) protein is 3-methyl-2-oxobutanoate hydroxymethyltransferase.